A 320-amino-acid polypeptide reads, in one-letter code: tRNA N6-adenosine threonylcarbamoyltransferase (320 aa).

Positions 113 and 117 each coordinate Fe cation. Substrate-binding positions include 143–147, aspartate 176, glycine 189, aspartate 193, and asparagine 281; that span reads VVSGG. Residue aspartate 305 coordinates Fe cation.

Belongs to the KAE1 / TsaD family. The cofactor is Fe(2+).

Its subcellular location is the cytoplasm. The enzyme catalyses L-threonylcarbamoyladenylate + adenosine(37) in tRNA = N(6)-L-threonylcarbamoyladenosine(37) in tRNA + AMP + H(+). Required for the formation of a threonylcarbamoyl group on adenosine at position 37 (t(6)A37) in tRNAs that read codons beginning with adenine. Is involved in the transfer of the threonylcarbamoyl moiety of threonylcarbamoyl-AMP (TC-AMP) to the N6 group of A37, together with TsaE and TsaB. TsaD likely plays a direct catalytic role in this reaction. This is tRNA N6-adenosine threonylcarbamoyltransferase from Mycoplasmoides gallisepticum (strain R(low / passage 15 / clone 2)) (Mycoplasma gallisepticum).